A 552-amino-acid polypeptide reads, in one-letter code: Non-structural protein NS1 (552 aa).

It belongs to the orbivirus non-structural protein NS1 family.

In Bluetongue virus 10 (isolate USA) (BTV 10), this protein is Non-structural protein NS1 (Segment-5).